A 270-amino-acid chain; its full sequence is Fibroblast growth factor 5 (270 aa).

The N-terminal stretch at 1-20 is a signal peptide; that stretch reads MSLSFLLLLFLSHLILSAWA. A disordered region spans residues 26-83; the sequence is LAPKGQPGPAATGRNPAGASSSRSSRGTTSSSSSSVSSSHSASLGNQGSGLEQSSFQW. The span at 43–68 shows a compositional bias: low complexity; that stretch reads GASSSRSSRGTTSSSSSSVSSSHSAS. The segment covering 69–83 has biased composition (polar residues); sequence LGNQGSGLEQSSFQW. N-linked (GlcNAc...) asparagine glycosylation occurs at Asn-112. A disordered region spans residues 236–257; sequence PEKKKPPSPVKPKVPLSAPRKS.

It belongs to the heparin-binding growth factors family. Interacts with FGFR1 and FGFR2. Affinity between fibroblast growth factors (FGFs) and their receptors is increased by heparan sulfate glycosaminoglycans that function as coreceptors. Expressed in skin.

It localises to the secreted. Plays an important role in the regulation of cell proliferation and cell differentiation. Required for normal regulation of the hair growth cycle. Functions as an inhibitor of hair elongation by promoting progression from anagen, the growth phase of the hair follicle, into catagen the apoptosis-induced regression phase. The protein is Fibroblast growth factor 5 (FGF5) of Felis catus (Cat).